Consider the following 310-residue polypeptide: Bacteriochlorophyll synthase 34 kDa chain (310 aa).

Residues 1–13 (MSDMSDQTRLSSP) are compositionally biased toward polar residues. Residues 1-20 (MSDMSDQTRLSSPPSLPLHK) are disordered. Helical transmembrane passes span 39–59 (VTWFAPTWAFMCGAIASGALG), 67–87 (LLLGMFMAGPILCGLSQVVND), 112–132 (HVYILTAVLTWIGASIALFLG), 134–154 (QVAFFVALGLVFALAYSLRPI), 166–186 (LVAISYEGLAWMAGHAAFAPL), 187–207 (TGESVTIALLYSLGAHGIMTV), 248–268 (VIGLLFHWGHPVAATVVAILL), and 287–307 (VFFNATAIMLYVWGMLAAAIG).

The protein resides in the cell membrane. The protein operates within porphyrin-containing compound metabolism; bacteriochlorophyll biosynthesis (light-independent). Its function is as follows. Catalyzes the esterification of bacteriochlorophyllide a by geranylgeraniol-PPi. The sequence is that of Bacteriochlorophyll synthase 34 kDa chain (bchG) from Chloroflexus aurantiacus (strain ATCC 29366 / DSM 635 / J-10-fl).